The primary structure comprises 175 residues: ATP synthase subunit delta (175 aa).

Belongs to the ATPase delta chain family. In terms of assembly, F-type ATPases have 2 components, F(1) - the catalytic core - and F(0) - the membrane proton channel. F(1) has five subunits: alpha(3), beta(3), gamma(1), delta(1), epsilon(1). F(0) has three main subunits: a(1), b(2) and c(10-14). The alpha and beta chains form an alternating ring which encloses part of the gamma chain. F(1) is attached to F(0) by a central stalk formed by the gamma and epsilon chains, while a peripheral stalk is formed by the delta and b chains.

The protein resides in the cell inner membrane. In terms of biological role, f(1)F(0) ATP synthase produces ATP from ADP in the presence of a proton or sodium gradient. F-type ATPases consist of two structural domains, F(1) containing the extramembraneous catalytic core and F(0) containing the membrane proton channel, linked together by a central stalk and a peripheral stalk. During catalysis, ATP synthesis in the catalytic domain of F(1) is coupled via a rotary mechanism of the central stalk subunits to proton translocation. Its function is as follows. This protein is part of the stalk that links CF(0) to CF(1). It either transmits conformational changes from CF(0) to CF(1) or is implicated in proton conduction. The chain is ATP synthase subunit delta from Xylella fastidiosa (strain M12).